The chain runs to 77 residues: Ras-related C3 botulinum toxin substrate 1 (77 aa).

22–24 (KLD) is a GTP binding site. Lys-53 participates in a covalent cross-link: Glycyl lysine isopeptide (Lys-Gly) (interchain with G-Cter in ubiquitin). Residue 65–66 (AL) participates in GTP binding.

This sequence belongs to the small GTPase superfamily. Rho family. Interacts with NISCH. Interacts with PIP5K1A. Interacts with the GTP-bound form of RAB7A. Interacts with SRGAP2. Interacts with CYFIP1/SRA-1. Interacts with PLXNB3. Interacts with ARHGDIA; the interaction is induced by SEMA5A, mediated through PLXNB3 and inactivates and stabilizes RAC1. Interacts (GTP-bound form preferentially) with PKN2 (via the REM repeats); the interaction stimulates autophosphorylation and phosphorylation of PKN2. Interacts with the GEF proteins PREX1, RASGRF2, FARP1, FARP2, DOCK1, DOCK2 and DOCK7, which promote the exchange between GDP and GTP, and therefore activate it. Interacts with PARD6A, PARD6B and PARD6G in a GTP-dependent manner. Part of a quaternary complex containing PARD3, some PARD6 protein (PARD6A, PARD6B or PARD6G) and some atypical PKC protein (PRKCI or PRKCZ), which plays a central role in epithelial cell polarization. Found in a trimeric complex composed of DOCK1 and ELMO1, which plays a central role in phagocytosis of apoptotic cells. Interacts with RALBP1 via its effector domain. Interacts with PLXNB1. Part of a complex with MAP2K3, MAP3K3, CCM2 and DEF6. Interacts with BAIAP2, BAIAP2L1 and DEF6. Interacts with Y.pseudotuberculosis YPKA and PLCB2. Interacts with NOXA1. Interacts with ARHGEF2. Interacts with TBC1D2. Interacts with UNKL. Interacts with USP6. Interacts with SPATA13. Interacts with ARHGEF16; mediates activation of RAC1 by EPHA2. Interacts with ITGB4. Interacts with S100A8 and calprotectin (S100A8/9). Interacts with PACSIN2. Interacts (when active) with PPP5C (via TPR repeats); activates PPP5C phosphatase activity and translocates PPP5C to the cell membrane. Interacts with RAPH1 (via Ras associating and PH domains). Interacts with MTSS2 (via IMD domain); this interaction may be important to potentiate PDGF-induced RAC1 activation. Interacts with PAK2. Interacts (GTP-bound form) with SH3RF1 and SH3RF3. Found in a complex with SH3RF1, MAPK8IP1/JIP1, MAP3K11/MLK3, MAP2K7/MKK7 and MAPK8/JNK1. Interacts (both active GTP- or inactive GDP-bound forms) with SH3RF2. Interacts (GTP-bound form preferentially) with CYRIB. Interacts with DOCK4 (via DOCKER domain); functions as a guanine nucleotide exchange factor (GEF) for RAC1. Interacts with GARRE1. Interacts with RAP1GDS1. May interact with ARHGAP36. Interacts with DSG3; the interaction is required for DSG3 translocation to cell-cell junctions, organization of cortical F-actin bundles and actin anchoring at cell-cell junctions. Component of the phagocyte NADPH oxidase complex composed of an obligatory core heterodimer formed by the membrane proteins CYBA and CYBB and the cytosolic regulatory subunits NCF1/p47-phox, NCF2/p67-phox, NCF4/p40-phox and the small GTPase RAC1 or RAC2. Interacts with NCF2. The N-terminus is blocked. In terms of processing, GTP-bound active form is ubiquitinated by HACE1, leading to its degradation by the proteasome.

It localises to the cytoplasm. Its subcellular location is the membrane. The protein localises to the melanosome. The protein resides in the cell projection. It is found in the lamellipodium. It localises to the dendrite. Its subcellular location is the synapse. The protein localises to the nucleus. It catalyses the reaction GTP + H2O = GDP + phosphate + H(+). Regulated by guanine nucleotide exchange factors (GEFs) which promote the exchange of bound GDP for free GTP, GTPase activating proteins (GAPs) which increase the GTP hydrolysis activity, and GDP dissociation inhibitors which inhibit the dissociation of the nucleotide from the GTPase. GTP hydrolysis is stimulated by ARHGAP30. Its function is as follows. Plasma membrane-associated small GTPase which cycles between active GTP-bound and inactive GDP-bound states. In its active state, binds to a variety of effector proteins to regulate cellular responses such as secretory processes, phagocytosis of apoptotic cells, epithelial cell polarization, neurons adhesion, migration and differentiation, and growth-factor induced formation of membrane ruffles. Rac1 p21/rho GDI heterodimer is the active component of the cytosolic factor sigma 1, which is involved in stimulation of the NADPH oxidase activity in macrophages. Essential for the SPATA13-mediated regulation of cell migration and adhesion assembly and disassembly. Stimulates PKN2 kinase activity. In concert with RAB7A, plays a role in regulating the formation of RBs (ruffled borders) in osteoclasts. In podocytes, promotes nuclear shuttling of NR3C2; this modulation is required for a proper kidney functioning. Required for atypical chemokine receptor ACKR2-induced LIMK1-PAK1-dependent phosphorylation of cofilin (CFL1) and for up-regulation of ACKR2 from endosomal compartment to cell membrane, increasing its efficiency in chemokine uptake and degradation. In neurons, is involved in dendritic spine formation and synaptic plasticity. In hippocampal neurons, involved in spine morphogenesis and synapse formation, through local activation at synapses by guanine nucleotide exchange factors (GEFs), such as ARHGEF6/ARHGEF7/PIX. In synapses, seems to mediate the regulation of F-actin cluster formation performed by SHANK3. In neurons, plays a crucial role in regulating GABA(A) receptor synaptic stability and hence GABAergic inhibitory synaptic transmission through its role in PAK1 activation and eventually F-actin stabilization. Required for DSG3 translocation to cell-cell junctions, DSG3-mediated organization of cortical F-actin bundles and anchoring of actin at cell junctions; via interaction with DSG3. Subunit of the phagocyte NADPH oxidase complex that mediates the transfer of electrons from cytosolic NADPH to O2 to produce the superoxide anion (O2(-)). This is Ras-related C3 botulinum toxin substrate 1 from Cavia porcellus (Guinea pig).